Reading from the N-terminus, the 485-residue chain is Glutamyl-tRNA(Gln) amidotransferase subunit A (485 aa).

Active-site charge relay system residues include Lys79 and Ser154. Ser178 acts as the Acyl-ester intermediate in catalysis.

This sequence belongs to the amidase family. GatA subfamily. As to quaternary structure, heterotrimer of A, B and C subunits.

It carries out the reaction L-glutamyl-tRNA(Gln) + L-glutamine + ATP + H2O = L-glutaminyl-tRNA(Gln) + L-glutamate + ADP + phosphate + H(+). Its function is as follows. Allows the formation of correctly charged Gln-tRNA(Gln) through the transamidation of misacylated Glu-tRNA(Gln) in organisms which lack glutaminyl-tRNA synthetase. The reaction takes place in the presence of glutamine and ATP through an activated gamma-phospho-Glu-tRNA(Gln). The sequence is that of Glutamyl-tRNA(Gln) amidotransferase subunit A from Staphylococcus aureus (strain Mu3 / ATCC 700698).